Consider the following 103-residue polypeptide: Pyrimidine/purine nucleoside phosphorylase (103 aa).

This sequence belongs to the nucleoside phosphorylase PpnP family.

It carries out the reaction a purine D-ribonucleoside + phosphate = a purine nucleobase + alpha-D-ribose 1-phosphate. The catalysed reaction is adenosine + phosphate = alpha-D-ribose 1-phosphate + adenine. The enzyme catalyses cytidine + phosphate = cytosine + alpha-D-ribose 1-phosphate. It catalyses the reaction guanosine + phosphate = alpha-D-ribose 1-phosphate + guanine. It carries out the reaction inosine + phosphate = alpha-D-ribose 1-phosphate + hypoxanthine. The catalysed reaction is thymidine + phosphate = 2-deoxy-alpha-D-ribose 1-phosphate + thymine. The enzyme catalyses uridine + phosphate = alpha-D-ribose 1-phosphate + uracil. It catalyses the reaction xanthosine + phosphate = alpha-D-ribose 1-phosphate + xanthine. Functionally, catalyzes the phosphorolysis of diverse nucleosides, yielding D-ribose 1-phosphate and the respective free bases. Can use uridine, adenosine, guanosine, cytidine, thymidine, inosine and xanthosine as substrates. Also catalyzes the reverse reactions. The sequence is that of Pyrimidine/purine nucleoside phosphorylase from Shewanella sp. (strain MR-4).